A 216-amino-acid chain; its full sequence is 3-keto-L-gulonate-6-phosphate decarboxylase UlaD (216 aa).

Aspartate 11 contacts substrate. Glutamate 33 and aspartate 62 together coordinate Mg(2+). Arginine 192 provides a ligand contact to substrate.

It belongs to the HPS/KGPDC family. KGPDC subfamily. In terms of assembly, homodimer. Requires Mg(2+) as cofactor.

It catalyses the reaction 3-dehydro-L-gulonate 6-phosphate + H(+) = L-xylulose 5-phosphate + CO2. The protein operates within cofactor degradation; L-ascorbate degradation; D-xylulose 5-phosphate from L-ascorbate: step 2/4. In terms of biological role, catalyzes the decarboxylation of 3-keto-L-gulonate-6-P into L-xylulose-5-P. Is involved in the anaerobic L-ascorbate utilization. This is 3-keto-L-gulonate-6-phosphate decarboxylase UlaD from Escherichia coli O127:H6 (strain E2348/69 / EPEC).